A 231-amino-acid polypeptide reads, in one-letter code: Phosphatidylserine decarboxylase proenzyme (231 aa).

The active-site Schiff-base intermediate with substrate; via pyruvic acid is S188. Position 188 is a pyruvic acid (Ser); by autocatalysis (S188).

Belongs to the phosphatidylserine decarboxylase family. PSD-A subfamily. As to quaternary structure, heterodimer of a large membrane-associated beta subunit and a small pyruvoyl-containing alpha subunit. The cofactor is pyruvate. Post-translationally, is synthesized initially as an inactive proenzyme. Formation of the active enzyme involves a self-maturation process in which the active site pyruvoyl group is generated from an internal serine residue via an autocatalytic post-translational modification. Two non-identical subunits are generated from the proenzyme in this reaction, and the pyruvate is formed at the N-terminus of the alpha chain, which is derived from the carboxyl end of the proenzyme. The post-translation cleavage follows an unusual pathway, termed non-hydrolytic serinolysis, in which the side chain hydroxyl group of the serine supplies its oxygen atom to form the C-terminus of the beta chain, while the remainder of the serine residue undergoes an oxidative deamination to produce ammonia and the pyruvoyl prosthetic group on the alpha chain.

The protein localises to the cell membrane. The enzyme catalyses a 1,2-diacyl-sn-glycero-3-phospho-L-serine + H(+) = a 1,2-diacyl-sn-glycero-3-phosphoethanolamine + CO2. It functions in the pathway phospholipid metabolism; phosphatidylethanolamine biosynthesis; phosphatidylethanolamine from CDP-diacylglycerol: step 2/2. In terms of biological role, catalyzes the formation of phosphatidylethanolamine (PtdEtn) from phosphatidylserine (PtdSer). In Rickettsia africae (strain ESF-5), this protein is Phosphatidylserine decarboxylase proenzyme.